Reading from the N-terminus, the 375-residue chain is Alcohol dehydrogenase 1C (375 aa).

The residue at position 2 (Ser2) is an N-acetylserine. Ser23 carries the phosphoserine modification. Zn(2+) contacts are provided by Cys47, His68, Cys98, Cys101, Cys104, Cys112, and Cys175. Residues 200 to 205 (GLGGVG), Asp224, Lys229, Ile270, 293 to 295 (VGV), 318 to 320 (AIF), and Arg370 each bind NAD(+).

This sequence belongs to the zinc-containing alcohol dehydrogenase family. As to quaternary structure, dimer of identical or non-identical chains of class I alcohol dehydrogenase: ADH1A, ADH1B, and ADH1C. Zn(2+) serves as cofactor.

The protein localises to the cytoplasm. It carries out the reaction a primary alcohol + NAD(+) = an aldehyde + NADH + H(+). The catalysed reaction is ethanol + NAD(+) = acetaldehyde + NADH + H(+). Its function is as follows. Alcohol dehydrogenase. Exhibits high activity for ethanol oxidation and plays a major role in ethanol catabolism. In Homo sapiens (Human), this protein is Alcohol dehydrogenase 1C (ADH1C).